The following is a 266-amino-acid chain: tRNA pseudouridine synthase A (266 aa).

The active-site Nucleophile is aspartate 57. Substrate is bound at residue tyrosine 115.

This sequence belongs to the tRNA pseudouridine synthase TruA family. Homodimer.

The enzyme catalyses uridine(38/39/40) in tRNA = pseudouridine(38/39/40) in tRNA. Its function is as follows. Formation of pseudouridine at positions 38, 39 and 40 in the anticodon stem and loop of transfer RNAs. The polypeptide is tRNA pseudouridine synthase A (Buchnera aphidicola subsp. Acyrthosiphon pisum (strain APS) (Acyrthosiphon pisum symbiotic bacterium)).